We begin with the raw amino-acid sequence, 366 residues long: Peptide chain release factor 2 (366 aa).

Gln-251 bears the N5-methylglutamine mark.

Belongs to the prokaryotic/mitochondrial release factor family. Post-translationally, methylated by PrmC. Methylation increases the termination efficiency of RF2.

The protein localises to the cytoplasm. In terms of biological role, peptide chain release factor 2 directs the termination of translation in response to the peptide chain termination codons UGA and UAA. In Bacillus subtilis (strain 168), this protein is Peptide chain release factor 2 (prfB).